A 149-amino-acid chain; its full sequence is Transcriptional repressor NrdR (149 aa).

The segment at 3 to 34 is a zinc-finger region; the sequence is CPFCSIQETKVIDSRLVADGHQVRRRRECTMC. Residues 49 to 139 enclose the ATP-cone domain; sequence PRVVKRDGSR…VYRSFEDIRE (91 aa).

The protein belongs to the NrdR family. The cofactor is Zn(2+).

Functionally, negatively regulates transcription of bacterial ribonucleotide reductase nrd genes and operons by binding to NrdR-boxes. The protein is Transcriptional repressor NrdR of Pseudoalteromonas atlantica (strain T6c / ATCC BAA-1087).